The following is a 250-amino-acid chain: Ureidoacrylate amidohydrolase RutB (250 aa).

Catalysis depends on Asp44, which acts as the Proton acceptor. The active site involves Lys153. The active-site Nucleophile is the Cys186.

Belongs to the isochorismatase family. RutB subfamily.

The catalysed reaction is (Z)-3-ureidoacrylate + H2O + H(+) = (Z)-3-aminoacrylate + NH4(+) + CO2. It catalyses the reaction (Z)-3-ureidoacrylate + H2O = (Z)-3-aminoacrylate + carbamate + H(+). The enzyme catalyses (Z)-2-methylureidoacrylate + H2O + H(+) = (Z)-2-methylaminoacrylate + NH4(+) + CO2. Hydrolyzes ureidoacrylate to form aminoacrylate and carbamate. The carbamate hydrolyzes spontaneously, thereby releasing one of the nitrogen atoms of the pyrimidine ring as ammonia and one of its carbon atoms as CO2. This chain is Ureidoacrylate amidohydrolase RutB, found in Pantoea ananatis (strain LMG 20103).